The chain runs to 133 residues: ATP synthase epsilon chain, chloroplastic (133 aa).

Belongs to the ATPase epsilon chain family. F-type ATPases have 2 components, CF(1) - the catalytic core - and CF(0) - the membrane proton channel. CF(1) has five subunits: alpha(3), beta(3), gamma(1), delta(1), epsilon(1). CF(0) has three main subunits: a, b and c.

The protein resides in the plastid. It localises to the chloroplast thylakoid membrane. Its function is as follows. Produces ATP from ADP in the presence of a proton gradient across the membrane. The protein is ATP synthase epsilon chain, chloroplastic of Nicotiana tomentosiformis (Tobacco).